The primary structure comprises 648 residues: Probable LRR receptor-like serine/threonine-protein kinase At4g30520 (648 aa).

The signal sequence occupies residues 1–30 (MVVVTKKTMKIQIHLLYSFLFLCFSTLTLS). At 31-238 (SEPRNPEVEA…SSSGRRSNRL (208 aa)) the chain is on the extracellular side. N-linked (GlcNAc...) asparagine glycans are attached at residues Asn-99 and Asn-112. 4 LRR repeats span residues 100–125 (LTNL…GFLP), 127–148 (LQTL…IDQL), 149–172 (SSLQ…LSQI), and 174–199 (HLSF…TFNV). N-linked (GlcNAc...) asparagine glycosylation is found at Asn-158 and Asn-184. The helical transmembrane segment at 239-259 (AIALSVSLGSVVILVLALGSF) threads the bilayer. The Cytoplasmic segment spans residues 260–648 (CWYRKKQRRL…SFAMELSGPR (389 aa)). At Thr-300 the chain carries Phosphothreonine. Positions 303–582 (FSSKNILGAG…EGDGLAERWA (280 aa)) constitute a Protein kinase domain. 309 to 317 (LGAGGFGNV) provides a ligand contact to ATP. The residue at position 326 (Thr-326) is a Phosphothreonine. Position 331 (Lys-331) interacts with ATP. Residues Ser-384 and Ser-387 each carry the phosphoserine modification. Asp-426 (proton acceptor) is an active-site residue. A phosphothreonine mark is found at Thr-459, Thr-460, and Thr-465. Tyr-473 carries the phosphotyrosine modification. Ser-475 bears the Phosphoserine mark. Residue Thr-476 is modified to Phosphothreonine. A Phosphoserine modification is found at Ser-480. Thr-555 carries the post-translational modification Phosphothreonine.

The protein belongs to the protein kinase superfamily. Ser/Thr protein kinase family.

It is found in the cell membrane. It carries out the reaction L-seryl-[protein] + ATP = O-phospho-L-seryl-[protein] + ADP + H(+). The catalysed reaction is L-threonyl-[protein] + ATP = O-phospho-L-threonyl-[protein] + ADP + H(+). The polypeptide is Probable LRR receptor-like serine/threonine-protein kinase At4g30520 (Arabidopsis thaliana (Mouse-ear cress)).